The primary structure comprises 218 residues: MGRLLALVVGAALVSSACGGCVEVDSETEAVYGMTFKILCISCKRRSETNAETFTEWTFRQKGTEEFVKILRYENEVLQLEEDERFEGRVVWNGSRGTKDLQDLSIFITNVTYNHSGDYECHVYRLLFFENYEHNTSVVKKIHIEVVDKANRDMASIVSEIMMYVLIVVLTIWLVAEMIYCYKKIAAATETAAQENASEYLAITSESKENCTGVQVAE.

An N-terminal signal peptide occupies residues 1 to 18 (MGRLLALVVGAALVSSAC). The Extracellular portion of the chain corresponds to 19-157 (GGCVEVDSET…DKANRDMASI (139 aa)). 2 cysteine pairs are disulfide-bonded: Cys-21-Cys-43 and Cys-40-Cys-121. Residues 22-150 (VEVDSETEAV…KIHIEVVDKA (129 aa)) form the Ig-like C2-type domain. Asn-93, Asn-110, Asn-114, and Asn-135 each carry an N-linked (GlcNAc...) asparagine glycan. Residues 158–179 (VSEIMMYVLIVVLTIWLVAEMI) form a helical membrane-spanning segment. The Cytoplasmic portion of the chain corresponds to 180–218 (YCYKKIAAATETAAQENASEYLAITSESKENCTGVQVAE).

Belongs to the sodium channel auxiliary subunit SCN1B (TC 8.A.17) family. As to quaternary structure, voltage-gated sodium (Nav) channel consists of an ion-conducting pore-forming alpha subunit functional on its own that is regulated by one or more beta subunits. Interacts with SCN1A; regulatory subunit of SCN1A/Nav1.1. Interacts with SCN3A; regulatory subunit of SCN3A/Nav1.3. Interacts with SCN4A; regulatory subunit of SCN4A/Nav1.4. Interacts with SCN5A; regulatory subunit of SCN5A/Nav1.5. Interacts with SCN8A; regulatory subunit of SCN8A/Nav1.6. Interacts with SCN9A; regulatory subunit of SCN9A/Nav1.7. Interacts with SCN10A; regulatory subunit of SCN10A/Nav1.8. Interacts with NFASC. Interacts with TMEM65. As to expression, the overall expression of isoform 1 and isoform 2 is very similar. Isoform 1 is abundantly expressed in skeletal muscle, heart and brain. Isoform 2 is highly expressed in brain and skeletal muscle and present at a very low level in heart, placenta, lung, liver, kidney and pancreas. In brain, isoform 2 is most abundant in the cerebellum, followed by the cerebral cortex and occipital lobe, while isoform 1 levels are higher in the cortex compared to the cerebellum. Isoform 2 is expressed in many regions of the brain, including cerebellar Purkinje cells, cortex pyramidal neurons and many of the neuronal fibers throughout the brain (at protein level). Also detected in dorsal root ganglion, in fibers of the spinal nerve and in cortical neurons and their processes (at protein level).

The protein resides in the cell membrane. The protein localises to the perikaryon. Its subcellular location is the cell projection. It is found in the axon. It localises to the secreted. Functionally, regulatory subunit of multiple voltage-gated sodium (Nav) channels directly mediating the depolarization of excitable membranes. Navs, also called VGSCs (voltage-gated sodium channels) or VDSCs (voltage-dependent sodium channels), operate by switching between closed and open conformations depending on the voltage difference across the membrane. In the open conformation they allow Na(+) ions to selectively pass through the pore, along their electrochemical gradient. The influx of Na+ ions provokes membrane depolarization, initiating the propagation of electrical signals throughout cells and tissues. The accessory beta subunits participate in localization and functional modulation of the Nav channels. Modulates the activity of SCN1A/Nav1.1, SCN2A/Nav1.2, SCN3A/Nav1.3, SCN4A/Nav1.4, SCN5A/Nav1.5, SCN8A/Nav1.6, SCN9A/Nav1.7 and SCN10A/Nav1.8. Its function is as follows. Cell adhesion molecule that plays a critical role in neuronal migration and pathfinding during brain development. Stimulates neurite outgrowth. Has no regulatory function on the SCN2A sodium channel complex. The sequence is that of Sodium channel regulatory subunit beta-1 from Homo sapiens (Human).